Here is a 725-residue protein sequence, read N- to C-terminus: Beta-adducin (725 aa).

Residues 1–22 (MSEDTVPEAASPPPSQGQHYFD) form a disordered region. Residues S11 and S25 each carry the phosphoserine modification. T55 carries the phosphothreonine modification. A phosphoserine mark is found at S60 and S344. Positions 425 to 444 (KQQKEKTRWLNTPNTYLRVN) are interaction with calmodulin. The segment at 525–725 (AEKSRSPSTE…KSKKKEKVES (201 aa)) is disordered. Phosphoserine occurs at positions 530 and 532. T533 carries the phosphothreonine modification. Position 535 is a phosphoserine (S535). The residue at position 561 (T561) is a Phosphothreonine. A compositionally biased stretch (basic and acidic residues) spans 566–589 (EEYKKEVERKKLEQEQEGEKDIAT). S594, S598, S602, and S606 each carry phosphoserine. Over residues 596–621 (VKSTPASPVQSPSKAGTKSPAVSPSK) the composition is skewed to polar residues. At T612 the chain carries Phosphothreonine. Phosphoserine occurs at positions 614, 618, and 620. Residues 622–631 (TSEDTKKTEV) show a composition bias toward basic and acidic residues. Residue T674 is modified to Phosphothreonine. A phosphoserine mark is found at S678, S685, S688, S692, S696, S698, S700, S702, and S712. Positions 687-700 (TSGPLSPEGSPSKS) are enriched in low complexity. Residues 701–725 (PSKKKKKFRTPSFLKKSKKKEKVES) show a composition bias toward basic residues. Positions 703–720 (KKKKKFRTPSFLKKSKKK) are interaction with calmodulin.

This sequence belongs to the aldolase class II family. Adducin subfamily. Found in a complex with ADD2, DMTN and SLC2A1. Interacts with SLC2A1. Heterodimer of an alpha and a beta subunit.

The protein localises to the cytoplasm. It localises to the cytoskeleton. The protein resides in the cell membrane. In terms of biological role, membrane-cytoskeleton-associated protein that promotes the assembly of the spectrin-actin network. Binds to the erythrocyte membrane receptor SLC2A1/GLUT1 and may therefore provide a link between the spectrin cytoskeleton to the plasma membrane. Binds to calmodulin. Calmodulin binds preferentially to the beta subunit. This Mus musculus (Mouse) protein is Beta-adducin (Add2).